The primary structure comprises 189 residues: Parkinson disease protein 7 homolog (189 aa).

2 S-palmitoyl cysteine lipidation sites follow: cysteine 46 and cysteine 53. Tyrosine 67 carries the post-translational modification Phosphotyrosine. Cysteine 106 carries the S-palmitoyl cysteine lipid modification. Cysteine 106 acts as the Nucleophile in catalysis. Cysteine 106 is modified (cysteine sulfinic acid (-SO2H)). Cysteine sulfinic acid (-SO2H); alternate is present on cysteine 106. Cysteine 106 carries the S-palmitoyl cysteine; alternate lipid modification. Residue histidine 126 is part of the active site. Lysine 130 is covalently cross-linked (Glycyl lysine isopeptide (Lys-Gly) (interchain with G-Cter in SUMO)). N6-acetyllysine is present on lysine 148. Lysine 182 carries the N6-succinyllysine modification.

It belongs to the peptidase C56 family. Homodimer. Requires Deglycase activity does not require glutathione as a cofactor, however, glycated glutathione constitutes a PARK7 substrate. as cofactor. Post-translationally, sumoylated on Lys-130 by pias2 or pias4; which is essential for cell-growth promoting activity and transforming activity. In terms of processing, undergoes cleavage of a C-terminal peptide and subsequent activation of protease activity in response to oxidative stress. As to expression, larval brain and gut from 96 hours post-fertilization (hpf). Ubiquitous in adult; most abundant in brain, eye, heart and muscle. Within brain, neuronal expression is widespread, particularly in the cerebellum, medullary reticular formation and diencephalon. Expressed in major forebrain and diencephalic dopaminergic cell groups.

The protein resides in the cell membrane. It is found in the cytoplasm. It localises to the nucleus. The protein localises to the membrane raft. Its subcellular location is the mitochondrion. The protein resides in the endoplasmic reticulum. It carries out the reaction N(omega)-(1-hydroxy-2-oxopropyl)-L-arginyl-[protein] + H2O = lactate + L-arginyl-[protein] + H(+). The enzyme catalyses N(6)-(1-hydroxy-2-oxopropyl)-L-lysyl-[protein] + H2O = lactate + L-lysyl-[protein] + H(+). It catalyses the reaction S-(1-hydroxy-2-oxopropyl)-L-cysteinyl-[protein] + H2O = lactate + L-cysteinyl-[protein] + H(+). The catalysed reaction is N(omega)-(1-hydroxy-2-oxoethyl)-L-arginyl-[protein] + H2O = L-arginyl-[protein] + glycolate + H(+). It carries out the reaction N(6)-(1-hydroxy-2-oxoethyl)-L-lysyl-[protein] + H2O = glycolate + L-lysyl-[protein] + H(+). The enzyme catalyses S-(1-hydroxy-2-oxoethyl)-L-cysteinyl-[protein] + H2O = glycolate + L-cysteinyl-[protein] + H(+). It catalyses the reaction N(2)-(1-hydroxy-2-oxopropyl)-dGTP + H2O = lactate + dGTP + H(+). The catalysed reaction is N(2)-(1-hydroxy-2-oxopropyl)-GTP + H2O = lactate + GTP + H(+). It carries out the reaction N(2)-(1-hydroxy-2-oxopropyl)-GDP + H2O = lactate + GDP + H(+). The enzyme catalyses N(2)-(1-hydroxy-2-oxopropyl)-GMP + H2O = lactate + GMP + H(+). It catalyses the reaction N(2)-(1-hydroxy-2-oxoethyl)-dGTP + H2O = dGTP + glycolate + H(+). The catalysed reaction is N(2)-(1-hydroxy-2-oxoethyl)-GTP + H2O = glycolate + GTP + H(+). It carries out the reaction N(2)-(1-hydroxy-2-oxoethyl)-GDP + H2O = glycolate + GDP + H(+). The enzyme catalyses N(2)-(1-hydroxy-2-oxoethyl)-GMP + H2O = glycolate + GMP + H(+). It catalyses the reaction an N(2)-(1-hydroxy-2-oxopropyl)-guanosine in RNA + H2O = a guanosine in RNA + lactate + H(+). The catalysed reaction is an N(2)-(1-hydroxy-2-oxopropyl)-2'-deoxyguanosine in DNA + H2O = a 2'-deoxyguanosine in DNA + lactate + H(+). It carries out the reaction an N(2)-(1-hydroxy-2-oxoethyl)-guanosine in RNA + H2O = a guanosine in RNA + glycolate + H(+). The enzyme catalyses an N(2)-(1-hydroxy-2-oxoethyl)-2'-deoxyguanosine in DNA + H2O = a 2'-deoxyguanosine in DNA + glycolate + H(+). Multifunctional protein with controversial molecular function which plays an important role in cell protection against oxidative stress and cell death acting as oxidative stress sensor and redox-sensitive chaperone and protease. It is involved in neuroprotective mechanisms like the stabilization of NFE2L2 and PINK1 proteins, male fertility as a positive regulator of androgen signaling pathway as well as cell growth and transformation through, for instance, the modulation of NF-kappa-B signaling pathway. Has been described as a protein and nucleotide deglycase that catalyzes the deglycation of the Maillard adducts formed between amino groups of proteins or nucleotides and reactive carbonyl groups of glyoxals. But this function is rebuted by other works. As a protein deglycase, repairs methylglyoxal- and glyoxal-glycated proteins, and releases repaired proteins and lactate or glycolate, respectively. Deglycates cysteine, arginine and lysine residues in proteins, and thus reactivates these proteins by reversing glycation by glyoxals. Acts on early glycation intermediates (hemithioacetals and aminocarbinols), preventing the formation of advanced glycation endproducts (AGE) that cause irreversible damage. Also functions as a nucleotide deglycase able to repair glycated guanine in the free nucleotide pool (GTP, GDP, GMP, dGTP) and in DNA and RNA. Is thus involved in a major nucleotide repair system named guanine glycation repair (GG repair), dedicated to reversing methylglyoxal and glyoxal damage via nucleotide sanitization and direct nucleic acid repair. Protects histones from adduction by methylglyoxal, controls the levels of methylglyoxal-derived argininine modifications on chromatin. Displays a very low glyoxalase activity that may reflect its deglycase activity. It is involved in neuroprotective mechanisms as well as cell growth and transformation. Its involvement in protein repair could also explain other unrelated functions. Eliminates hydrogen peroxide and protects cells against hydrogen peroxide-induced cell death. Required for correct mitochondrial morphology and function as well as for autophagy of dysfunctional mitochondria. Regulates astrocyte inflammatory responses, may modulate lipid rafts-dependent endocytosis in astrocytes and neuronal cells. Binds to a number of mRNAs containing multiple copies of GG or CC motifs and partially inhibits their translation but dissociates following oxidative stress. Metal-binding protein able to bind copper as well as toxic mercury ions, enhances the cell protection mechanism against induced metal toxicity. The sequence is that of Parkinson disease protein 7 homolog from Danio rerio (Zebrafish).